An 826-amino-acid chain; its full sequence is G-protein coupled receptor-associated sorting protein 2 (826 aa).

Disordered regions lie at residues 1–126, 204–286, 336–371, and 506–534; these read MTGA…AQAW, WCYP…NPFC, EGNR…QESR, and IPEG…DSVA. Residues 13-31 are compositionally biased toward basic and acidic residues; sequence KPDKKPQEEVAGGAERESE. The segment covering 59–73 has biased composition (polar residues); it reads SSRARPKTETQSVSG. The segment covering 231–247 has biased composition (basic and acidic residues); the sequence is TREETSIRSWPREEVNT. Residues 248-264 show a composition bias toward basic residues; sequence RSRHRAKHQTNARSKPR. 2 positions are modified to phosphoserine: Ser275 and Ser277.

Belongs to the GPRASP family. In terms of assembly, interacts with cytoplasmic tails of a variety of G-protein coupled receptors such as muscarinic acetylcholine receptor M1/CHRM1 and calcitonin receptor/CALCR. In terms of tissue distribution, strongly expressed in the brain and the cochlea. Also in lung and muscle tissues. Localized in multiple structures of the cochlea, detected in the spiral ganglion, stria vascularis, spiral ligament, inner and outer hair cells.

May play a role in regulation of a variety of G-protein coupled receptors. The polypeptide is G-protein coupled receptor-associated sorting protein 2 (Gprasp2) (Mus musculus (Mouse)).